We begin with the raw amino-acid sequence, 245 residues long: 14-3-3 protein zeta/delta (245 aa).

Residue methionine 1 is modified to N-acetylmethionine. An N6-acetyllysine modification is found at lysine 3. Serine 58 carries the post-translational modification Phosphoserine; by PKA. Lysine 68 is subject to N6-acetyllysine. 3 positions are modified to phosphoserine: serine 184, serine 207, and serine 210. Phosphothreonine; by CK1 is present on threonine 232.

This sequence belongs to the 14-3-3 family. In terms of assembly, homodimer. Heterodimerizes with YWHAE. Homo- and heterodimerization is inhibited by phosphorylation on Ser-58. Interacts with FOXO4, NOXA1, SSH1 and ARHGEF2. Interacts with CDK16 and with WEE1 (C-terminal). Interacts with MLF1 (phosphorylated form); the interaction retains it in the cytoplasm. Interacts with BSPRY. Interacts with Thr-phosphorylated ITGB2. Interacts with Pseudomonas aeruginosa exoS (unphosphorylated form). Interacts with BAX; the interaction occurs in the cytoplasm. Under stress conditions, MAPK8-mediated phosphorylation releases BAX to mitochondria. Interacts with phosphorylated RAF1; the interaction is inhibited when YWHAZ is phosphorylated on Thr-232. Interacts with TP53; the interaction enhances p53 transcriptional activity. The Ser-58 phosphorylated form inhibits this interaction and p53 transcriptional activity. Interacts with ABL1 (phosphorylated form); the interaction retains ABL1 in the cytoplasm. Interacts with PKA-phosphorylated AANAT; the interaction modulates AANAT enzymatic activity by increasing affinity for arylalkylamines and acetyl-CoA and protecting the enzyme from dephosphorylation and proteasomal degradation. It may also prevent thiol-dependent inactivation. Interacts with AKT1; the interaction phosphorylates YWHAZ and modulates dimerization. Interacts with GAB2. Interacts with SAMSN1. Interacts with BCL2L11 and TLK2. Interacts with the 'Thr-369' phosphorylated form of DAPK2. Interacts with PI4KB, TBC1D22A and TBC1D22B. Interacts with ZFP36L1 (via phosphorylated form); this interaction occurs in a p38 MAPK- and AKT-signaling pathways. Interacts with SLITRK1. Interacts with AK5, LDB1, MADD, PDE1A and SMARCB1. Interacts with ARHGEF7 and GIT1. Interacts with MEFV. Interacts with ADAM22 (via C-terminus). Post-translationally, the delta, brain-specific form differs from the zeta form in being phosphorylated. Phosphorylation on Ser-184 by MAPK8; promotes dissociation of BAX and translocation of BAX to mitochondria. Phosphorylation on Thr-232; inhibits binding of RAF1. Phosphorylated on Ser-58 by PKA and protein kinase C delta type catalytic subunit in a sphingosine-dependent fashion. Phosphorylation on Ser-58 by PKA; disrupts homodimerization and heterodimerization with YHAE and TP53.

It localises to the cytoplasm. Its subcellular location is the melanosome. Functionally, adapter protein implicated in the regulation of a large spectrum of both general and specialized signaling pathways. Binds to a large number of partners, usually by recognition of a phosphoserine or phosphothreonine motif. Binding generally results in the modulation of the activity of the binding partner. Promotes cytosolic retention and inactivation of TFEB transcription factor by binding to phosphorylated TFEB. Induces ARHGEF7 activity on RAC1 as well as lamellipodia and membrane ruffle formation. In neurons, regulates spine maturation through the modulation of ARHGEF7 activity. This Mus musculus (Mouse) protein is 14-3-3 protein zeta/delta (Ywhaz).